The primary structure comprises 323 residues: L-lactate dehydrogenase 1 (323 aa).

NAD(+) is bound by residues V18, D39, Y69, and 83-84 (GA). Residues Q86 and R92 each contribute to the substrate site. NAD(+) is bound by residues S105, 122–124 (VAN), and S147. Residue 124–127 (NPVD) participates in substrate binding. Position 152–155 (152–155 (DTGR)) interacts with substrate. The active-site Proton acceptor is H179. Y223 carries the post-translational modification Phosphotyrosine. T232 provides a ligand contact to substrate.

This sequence belongs to the LDH/MDH superfamily. LDH family. In terms of assembly, homotetramer.

It is found in the cytoplasm. The enzyme catalyses (S)-lactate + NAD(+) = pyruvate + NADH + H(+). Its pathway is fermentation; pyruvate fermentation to lactate; (S)-lactate from pyruvate: step 1/1. Functionally, catalyzes the conversion of lactate to pyruvate. The chain is L-lactate dehydrogenase 1 from Lactobacillus acidophilus (strain ATCC 700396 / NCK56 / N2 / NCFM).